We begin with the raw amino-acid sequence, 283 residues long: Adenosyl-chloride synthase (283 aa).

Substrate contacts are provided by residues D11, Y70 to Y72, and T128 to G131. Residue G131 coordinates chloride.

Belongs to the SAM hydrolase / SAM-dependent halogenase family. Homotrimer.

The catalysed reaction is chloride + S-adenosyl-L-methionine = 5'-chloro-5'-deoxyadenosine + L-methionine. Its function is as follows. Involved in the biosynthesis of the proteosome inhibitor salinosporamide A (SalA). Catalyzes the halogenation of S-adenosyl-L-methionine (SAM) with chloride to generate 5'-chloro-5'-deoxyadenosine (5'-CIDA) and L-methionine. It can also use bromide and iodide, producing halogenated 5'-deoxyadenosine (5'-XDA) and L-methionine, however no halogenase activity is detected in the presence of fluoride. The polypeptide is Adenosyl-chloride synthase (Salinispora tropica (strain ATCC BAA-916 / DSM 44818 / JCM 13857 / NBRC 105044 / CNB-440)).